We begin with the raw amino-acid sequence, 210 residues long: ATP-dependent Clp protease proteolytic subunit (210 aa).

Serine 106 (nucleophile) is an active-site residue. Histidine 131 is an active-site residue.

The protein belongs to the peptidase S14 family. In terms of assembly, fourteen ClpP subunits assemble into 2 heptameric rings which stack back to back to give a disk-like structure with a central cavity, resembling the structure of eukaryotic proteasomes.

It is found in the cytoplasm. It carries out the reaction Hydrolysis of proteins to small peptides in the presence of ATP and magnesium. alpha-casein is the usual test substrate. In the absence of ATP, only oligopeptides shorter than five residues are hydrolyzed (such as succinyl-Leu-Tyr-|-NHMec, and Leu-Tyr-Leu-|-Tyr-Trp, in which cleavage of the -Tyr-|-Leu- and -Tyr-|-Trp bonds also occurs).. Cleaves peptides in various proteins in a process that requires ATP hydrolysis. Has a chymotrypsin-like activity. Plays a major role in the degradation of misfolded proteins. This is ATP-dependent Clp protease proteolytic subunit from Rhodopseudomonas palustris (strain BisB18).